We begin with the raw amino-acid sequence, 246 residues long: Thaumatin-like protein 1a (246 aa).

The first 24 residues, 1–24, serve as a signal peptide directing secretion; the sequence is MMKSQVASLLGLTLAILFFSGAHA. Disulfide bonds link Cys33/Cys245, Cys81/Cys91, Cys96/Cys103, Cys151/Cys234, Cys156/Cys217, Cys164/Cys180, Cys184/Cys193, and Cys194/Cys204.

Belongs to the thaumatin family.

It is found in the secreted. The protein is Thaumatin-like protein 1a (TL1) of Malus domestica (Apple).